The following is a 3132-amino-acid chain: Enniatin synthetase (3132 aa).

Residues 53–466 (ADDKQRAVGH…VEKVDMMTQE (414 aa)) form a condensation 1 region. Positions 186 to 212 (NDEHPRQFETPDSSQATPEEDLQPNPS) are disordered. Positions 495 to 887 (SQSPNKAAVA…GRMDSQVKIR (393 aa)) are adenylation 1. The tract at residues 994–1013 (SQKTHSTPSQQSQAAISSGT) is disordered. The Carrier 1 domain maps to 1010–1086 (SSGTDTETKL…GLKAIVIGTS (77 aa)). S1047 is modified (O-(pantetheine 4'-phosphoryl)serine). The interval 1105 to 1534 (SYAQNRMWFL…ETCISVLPLT (430 aa)) is condensation 2. An adenylation 2 region spans residues 1563 to 1960 (FREQAAANPE…GRMDNQFKIR (398 aa)). Residues 2021-2177 (EGWQDHFESG…YLAEVIDGLI (157 aa)) form an S-adenosyl-L-methionine-dependent N-methyltransferase region. Carrier domains lie at 2504-2578 (FPIS…RQGL) and 2598-2672 (APRT…ESSH). S2538 and S2632 each carry O-(pantetheine 4'-phosphoryl)serine. Residues 2719-3124 (QDVYPSTQMQ…RHVLEEVCKT (406 aa)) are condensation 3.

The protein belongs to the NRP synthetase family. Pantetheine 4'-phosphate is required as a cofactor.

The protein operates within antibiotic biosynthesis; enniatin biosynthesis. Its function is as follows. Nonribosomal peptide synthetase that synthesizes enniatin by coupling three D-hydroxycarboxylic acids and three L-amino acids via amide and ester bonds in an alternating fashion. Whereas ESYN1 can accept different amino acids as precursors (L-valine, L-isoleucine or L-leucine), only one species of D-hydroxycarboxylic acid can be found in natural enniatin isolates (D-hydroxyisovaleric acid, D-Hiv). D-Hiv stems from L-valine deanimation by a valine aminotransferase to 2-keto-isovaleric acid (2-Kiv), which becomes subsequently reduced by a keto-isovaleric acid reductase (KivR) to D-Hiv. This chain is Enniatin synthetase, found in Fusarium oxysporum (Fusarium vascular wilt).